We begin with the raw amino-acid sequence, 230 residues long: 8-demethylnovobiocic acid C(8)-methyltransferase (230 aa).

It belongs to the methyltransferase superfamily.

It carries out the reaction 8-desmethylnovobiocic acid + S-adenosyl-L-methionine = novobiocic acid + S-adenosyl-L-homocysteine + H(+). It participates in antibiotic biosynthesis; novobiocin biosynthesis. C-methyltransferase that methylates 8-demethylnovobiocic acid to produce novobiocic acid in the novobiocin biosynthesis pathway. Novobiocin is an aminocoumarin family antibiotic that targets bacterial DNA gyrases. The polypeptide is 8-demethylnovobiocic acid C(8)-methyltransferase (novO) (Streptomyces niveus (Streptomyces spheroides)).